A 262-amino-acid polypeptide reads, in one-letter code: Transmembrane and immunoglobulin domain-containing protein 1 (262 aa).

The N-terminal stretch at 1–29 (MAWKSSVIMQMGRFLLLVILFLPREMTSS) is a signal peptide. The region spanning 30 to 114 (VLTVNGKTEN…LGRDQSVSVS (85 aa)) is the Ig-like C2-type 1 domain. Topologically, residues 30–220 (VLTVNGKTEN…IVKDKTVGVP (191 aa)) are extracellular. A disulfide bridge links Cys54 with Cys103. N-linked (GlcNAc...) asparagine glycans are attached at residues Asn58, Asn83, Asn118, Asn158, and Asn190. Residues 122-207 (PPLLSGNDFQ…KSSLKTESLD (86 aa)) form the Ig-like C2-type 2 domain. Cys143 and Cys195 form a disulfide bridge. A helical transmembrane segment spans residues 221–241 (IEPIIAACVVIFLTLCFGLIA). The Cytoplasmic portion of the chain corresponds to 242–262 (RRKKIMKLCMKDKDPHSETAL).

As to quaternary structure, homodimer. Post-translationally, N-glycosylated.

The protein localises to the cell membrane. It localises to the cytoplasm. May control cell-cell adhesion, cell migration and proliferation, cell morphology, and protects renal epithelial cells from oxidative cell injury to promote cell survival. This Homo sapiens (Human) protein is Transmembrane and immunoglobulin domain-containing protein 1.